The sequence spans 676 residues: MAAAKVALTKRADPAELKAIFLKYASIEKNGEFFMSPHDFVTRYLNIFGESQPNPKTVELLSGVVDQTKDGLISFQEFVAFESVLCAPDALFMVAFQLFDKAGKGEVTFEDVRQVFGQTTIHQHIPFNWDSEFVQLHFGKERKRHLTYAEFTQFLLEIQLEHAKQAFVQRDNAKTGKVTAIDFRDIMVTIRPHVLTPFVEECLVAAAGGTRSHQVSFSYFNGFNSLLNNMELIRKIYSTLAGSRKDVEVTKEEFALAAQKFGQVTPMEVDILFQLADLYEPRGRMTLADIERIAPLEEGMLPFNLAEAQRQQKASGDAARPFLLQLAESAYRFGLGSIAGAVGATAVYPIDLVKTRMQNQRSTGSFVGELMYKNSFDCFKKVLRYEGFFGLYRGLLPQLLGVAPEKAIKLTVNDFVRDKFMHKDGSVPLLAEIFAGGCAGGSQVIFTNPLEIVKIRLQVAGEITTGPRVSALSVVRDLGFFGIYKGAKACFLRDIPFSAIYFPCYAHVKASFANEDGQVSPGSLLLAGAIAGMPAASLVTPADVIKTRLQVAARAGQTTYSGVTDCFRKILREEGPKALWKGAGARVFRSSPQFGVTLLTYELLQRWFYVDFGGVKPVGSELVPKSRITLPAPNPDHVGGYKLAVATFAGIENKFGLYLPLFKPSASTSKVTAVGS.

N-acetylalanine is present on Ala2. Positions 2 to 295 are regulatory N-terminal domain; the sequence is AAAKVALTKR…TLADIERIAP (294 aa). At 2 to 332 the chain is on the mitochondrial intermembrane side; sequence AAAKVALTKR…LLQLAESAYR (331 aa). EF-hand domains lie at 51–86, 87–122, 125–157, and 158–193; these read SQPN…SVLC, APDA…TTIH, IPFN…FLLE, and IQLE…IRPH. Ca(2+) contacts are provided by Asp66, Thr68, Asp70, Leu72, and Glu77. Residues 296–312 are linker loop domain; the sequence is LEEGMLPFNLAEAQRQQ. A carrier domain region spans residues 322–613; the sequence is FLLQLAESAY…LQRWFYVDFG (292 aa). Solcar repeat units lie at residues 327–419, 427–511, and 519–607; these read AESA…VRDK, VPLL…VKAS, and VSPG…LQRW. A helical transmembrane segment spans residues 333–350; sequence FGLGSIAGAVGATAVYPI. Over 351-393 the chain is Mitochondrial matrix; that stretch reads DLVKTRMQNQRSTGSFVGELMYKNSFDCFKKVLRYEGFFGLYR. Lys354 and Lys373 each carry N6-acetyllysine. Residues 394–413 traverse the membrane as a helical segment; that stretch reads GLLPQLLGVAPEKAIKLTVN. The Mitochondrial intermembrane portion of the chain corresponds to 414–436; it reads DFVRDKFMHKDGSVPLLAEIFAG. Residues 437–450 form a helical membrane-spanning segment; the sequence is GCAGGSQVIFTNPL. The Mitochondrial matrix segment spans residues 451–485; sequence EIVKIRLQVAGEITTGPRVSALSVVRDLGFFGIYK. Lys454 is modified (N6-methyllysine). Lys485 bears the N6-acetyllysine; alternate mark. N6-succinyllysine; alternate is present on Lys485. Residues 486–505 traverse the membrane as a helical segment; it reads GAKACFLRDIPFSAIYFPCY. The Mitochondrial intermembrane portion of the chain corresponds to 506-524; the sequence is AHVKASFANEDGQVSPGSL. The chain crosses the membrane as a helical span at residues 525 to 542; it reads LLAGAIAGMPAASLVTPA. Residues 543-581 are Mitochondrial matrix-facing; the sequence is DVIKTRLQVAARAGQTTYSGVTDCFRKILREEGPKALWK. Lys581 bears the N6-succinyllysine mark. A helical membrane pass occupies residues 582–601; that stretch reads GAGARVFRSSPQFGVTLLTY. Over 602–676 the chain is Mitochondrial intermembrane; it reads ELLQRWFYVD…STSKVTAVGS (75 aa). The tract at residues 614 to 676 is C-terminal domain; the sequence is GVKPVGSELV…STSKVTAVGS (63 aa). The residue at position 663 (Lys663) is an N6-acetyllysine. Ser667 bears the Phosphoserine mark.

This sequence belongs to the mitochondrial carrier (TC 2.A.29) family. In terms of assembly, homodimer (via N-terminus).

Its subcellular location is the mitochondrion inner membrane. It catalyses the reaction L-aspartate(in) + L-glutamate(out) + H(+)(out) = L-aspartate(out) + L-glutamate(in) + H(+)(in). The enzyme catalyses 3-sulfino-L-alanine(out) + L-glutamate(in) + H(+)(in) = 3-sulfino-L-alanine(in) + L-glutamate(out) + H(+)(out). It carries out the reaction 3-sulfino-L-alanine(out) + L-aspartate(in) = 3-sulfino-L-alanine(in) + L-aspartate(out). L-aspartate and 3-sulfino-L-alanine uptake are both inhibited by glisoxepide. Functionally, mitochondrial electrogenic aspartate/glutamate antiporter that favors efflux of aspartate and entry of glutamate and proton within the mitochondria as part of the malate-aspartate shuttle. Also mediates the uptake of L-cysteinesulfinate (3-sulfino-L-alanine) by mitochondria in exchange of L-glutamate and proton. Can also exchange L-cysteinesulfinate with aspartate in their anionic form without any proton translocation. Lacks transport activity towards gamma-aminobutyric acid (GABA). This chain is Electrogenic aspartate/glutamate antiporter SLC25A13, mitochondrial, found in Rattus norvegicus (Rat).